We begin with the raw amino-acid sequence, 384 residues long: Glucans biosynthesis protein C (384 aa).

Helical transmembrane passes span 17–37 (AWLMLLGIPFHISLIYSTHSW), 54–74 (FIHAFRMQVFFVISGYFSYML), 91–111 (VGIPMLTAIPLLTLPQFILLQ), 140–160 (LWFLLVLVILTTVSIGIFTWF), 173–193 (AISLAKLSLIFFLLGIAYAAI), 212–232 (FIVMQTLFYVPFFILGALAFI), 240–260 (FTTPSRGCTLGAAVAFIAYLL), 274–294 (TESVITMVMGLWMVNVVFSLG), 311–331 (ASLFIYLVHHPLTLFFGAYIT), and 338–358 (LIGFLCGLIFVMGIALILYEI).

The protein belongs to the acyltransferase 3 family. OpgC subfamily.

The protein localises to the cell membrane. It participates in glycan metabolism; osmoregulated periplasmic glucan (OPG) biosynthesis. Its function is as follows. Necessary for the succinyl substitution of periplasmic glucans. Could catalyze the transfer of succinyl residues from the cytoplasmic side of the membrane to the nascent glucan backbones on the periplasmic side of the membrane. The polypeptide is Glucans biosynthesis protein C (Salmonella schwarzengrund (strain CVM19633)).